A 141-amino-acid polypeptide reads, in one-letter code: Large ribosomal subunit protein bL21 (141 aa).

The tract at residues Ala111–Glu141 is disordered. A compositionally biased stretch (low complexity) spans Glu118 to Ala133.

This sequence belongs to the bacterial ribosomal protein bL21 family. As to quaternary structure, part of the 50S ribosomal subunit. Contacts protein L20.

This protein binds to 23S rRNA in the presence of protein L20. In Synechococcus sp. (strain JA-2-3B'a(2-13)) (Cyanobacteria bacterium Yellowstone B-Prime), this protein is Large ribosomal subunit protein bL21.